Consider the following 136-residue polypeptide: uncharacterized protein (136 aa).

Helical transmembrane passes span 36–56 (FLLT…IYLI) and 63–83 (FAFA…LFLS).

It is found in the cell membrane. This is an uncharacterized protein from Mycoplasma pneumoniae (strain ATCC 29342 / M129 / Subtype 1) (Mycoplasmoides pneumoniae).